The sequence spans 453 residues: UDP-N-acetylmuramoylalanine--D-glutamate ligase (453 aa).

120 to 126 serves as a coordination point for ATP; it reads GSNGKST.

This sequence belongs to the MurCDEF family.

The protein localises to the cytoplasm. The enzyme catalyses UDP-N-acetyl-alpha-D-muramoyl-L-alanine + D-glutamate + ATP = UDP-N-acetyl-alpha-D-muramoyl-L-alanyl-D-glutamate + ADP + phosphate + H(+). The protein operates within cell wall biogenesis; peptidoglycan biosynthesis. Its function is as follows. Cell wall formation. Catalyzes the addition of glutamate to the nucleotide precursor UDP-N-acetylmuramoyl-L-alanine (UMA). This chain is UDP-N-acetylmuramoylalanine--D-glutamate ligase, found in Nitrosococcus oceani (strain ATCC 19707 / BCRC 17464 / JCM 30415 / NCIMB 11848 / C-107).